We begin with the raw amino-acid sequence, 413 residues long: MSMSRLSQQDPQVFQAIQDELKRQQTKIELIASENFVSEAVMEAQGSVLTNKYAEGYPGRRYYGGCEHVDVVEELARERAKQLFGAEHANVQPHSGAQANMAVYFTILQHGDTVLGMNLSHGGHLTHGSPVNFSGIQYNFIEYGVDPETHRINYDDVREKALKHKPKLIVAGASAYPRTIDFAKFREIADEVGAYFMVDMAHIAGLVAAGLHPNPVPYAHFVTTTTHKTLRGPRGGMILCQEQFAKQIDKAIFPGIQGGPLMHVIAAKAVALGEALQDDFKTYAQNIVNNAKRLAEALVAEGFTLVSGGTDNHLLLIDLRSIGLTGKVAEKVLDEIGITVNKNTIPYDPESPFVTSGIRIGTAAVTSRGFGLEEMDEIARIISIALKHKDDEQKLDEARRRVAALTEKFPLYV.

(6S)-5,6,7,8-tetrahydrofolate contacts are provided by residues leucine 119 and 123–125 (GHL). Lysine 228 is subject to N6-(pyridoxal phosphate)lysine. 351-353 (SPF) serves as a coordination point for (6S)-5,6,7,8-tetrahydrofolate.

It belongs to the SHMT family. In terms of assembly, homodimer. Requires pyridoxal 5'-phosphate as cofactor.

The protein localises to the cytoplasm. The catalysed reaction is (6R)-5,10-methylene-5,6,7,8-tetrahydrofolate + glycine + H2O = (6S)-5,6,7,8-tetrahydrofolate + L-serine. The protein operates within one-carbon metabolism; tetrahydrofolate interconversion. Its pathway is amino-acid biosynthesis; glycine biosynthesis; glycine from L-serine: step 1/1. Its function is as follows. Catalyzes the reversible interconversion of serine and glycine with tetrahydrofolate (THF) serving as the one-carbon carrier. This reaction serves as the major source of one-carbon groups required for the biosynthesis of purines, thymidylate, methionine, and other important biomolecules. Also exhibits THF-independent aldolase activity toward beta-hydroxyamino acids, producing glycine and aldehydes, via a retro-aldol mechanism. The chain is Serine hydroxymethyltransferase from Anoxybacillus flavithermus (strain DSM 21510 / WK1).